A 118-amino-acid chain; its full sequence is Inner membrane protein YhaI (118 aa).

Topologically, residues 1–25 are periplasmic; sequence MQWYLSVLKNYVGFSGRARRKEYWM. A helical transmembrane segment spans residues 26–46; sequence FTLINAIVGAIINVIQLILGL. E47 is a topological domain (cytoplasmic). Residues 48-68 form a helical membrane-spanning segment; that stretch reads LPYLSMLYLLATFLPVLALAI. Over 69 to 77 the chain is Periplasmic; sequence RRLHDTDRS. A helical membrane pass occupies residues 78-98; sequence GAWALLFFVPFIGWLVLLVFF. Residues 99 to 118 are Cytoplasmic-facing; it reads CTEGTSGSNRYGNDPKFGSN.

This sequence to E.coli YhaH.

The protein resides in the cell inner membrane. This is Inner membrane protein YhaI (yhaI) from Escherichia coli O157:H7.